The primary structure comprises 299 residues: tRNA-cytidine(32) 2-sulfurtransferase (299 aa).

Residues 56–61 carry the PP-loop motif motif; that stretch reads SGGKDS. Cysteine 131, cysteine 134, and cysteine 222 together coordinate [4Fe-4S] cluster.

Belongs to the TtcA family. Homodimer. It depends on Mg(2+) as a cofactor. [4Fe-4S] cluster serves as cofactor.

Its subcellular location is the cytoplasm. It carries out the reaction cytidine(32) in tRNA + S-sulfanyl-L-cysteinyl-[cysteine desulfurase] + AH2 + ATP = 2-thiocytidine(32) in tRNA + L-cysteinyl-[cysteine desulfurase] + A + AMP + diphosphate + H(+). It participates in tRNA modification. In terms of biological role, catalyzes the ATP-dependent 2-thiolation of cytidine in position 32 of tRNA, to form 2-thiocytidine (s(2)C32). The sulfur atoms are provided by the cysteine/cysteine desulfurase (IscS) system. This chain is tRNA-cytidine(32) 2-sulfurtransferase, found in Xylella fastidiosa (strain 9a5c).